A 556-amino-acid chain; its full sequence is Solute carrier family 22 member 1 (556 aa).

Residues 1–21 lie on the Cytoplasmic side of the membrane; sequence MPTVDDVLEQVGEFGWFQKQA. The helical transmembrane segment at 22 to 42 threads the bilayer; the sequence is FLLLCLISASLAPIYVGIVFL. Residues 43-150 lie on the Extracellular side of the membrane; it reads GFTPGHYCQN…LVCGDAWKVD (108 aa). The N-linked (GlcNAc...) asparagine glycan is linked to N71. A helical transmembrane segment spans residues 151-171; sequence LFQSCVNLGFFLGSLVVGYIA. At 172 to 177 the chain is on the cytoplasmic side; sequence DRFGRK. Residues 178 to 198 form a helical membrane-spanning segment; the sequence is LCLLVTTLVTSVSGVLTAVAP. The Extracellular segment spans residues 199–211; sequence DYTSMLLFRLLQG. A helical membrane pass occupies residues 212–231; that stretch reads MVSKGSWVSGYTLITEFVGS. Over 232–238 the chain is Cytoplasmic; the sequence is GYRRTTA. Residues 239 to 259 form a helical membrane-spanning segment; that stretch reads ILYQMAFTVGLVGLAGVAYAI. Residues 260–263 lie on the Extracellular side of the membrane; the sequence is PDWR. Residues 264 to 284 traverse the membrane as a helical segment; that stretch reads WLQLAVSLPTFLFLLYYWFVP. The Proline-rich sequence signature appears at 284–288; that stretch reads PESPR. The Cytoplasmic portion of the chain corresponds to 285–348; that stretch reads ESPRWLLSQK…FRTPNLRKHT (64 aa). S334 is subject to Phosphoserine. The chain crosses the membrane as a helical span at residues 349-369; that stretch reads VILMYLWFSCAVLYQGLIMHV. The Extracellular portion of the chain corresponds to 370–377; the sequence is GATGANLY. Residues 378–398 traverse the membrane as a helical segment; that stretch reads LDFFYSSLVEFPAAFIILVTI. Residues 399-403 lie on the Cytoplasmic side of the membrane; it reads DRIGR. A helical membrane pass occupies residues 404 to 424; it reads IYPIAASNLVTGAACLLMIFI. Residues 425-429 are Extracellular-facing; the sequence is PHELH. Residues 430-452 form a helical membrane-spanning segment; the sequence is WLNVTLACLGRMGATIVLQMVCL. Over 453-465 the chain is Cytoplasmic; the sequence is VNAELYPTFIRNL. A helical transmembrane segment spans residues 466 to 486; it reads GMMVCSALCDLGGIFTPFMVF. The Extracellular segment spans residues 487-493; the sequence is RLMEVWQ. Residues 494–514 traverse the membrane as a helical segment; sequence ALPLILFGVLGLTAGAMTLLL. Residues 515–556 lie on the Cytoplasmic side of the membrane; the sequence is PETKGVALPETIEEAENLGRRKSKAKENTIYLQVQTGKSSST. Position 543 is a phosphothreonine (T543).

This sequence belongs to the major facilitator (TC 2.A.1) superfamily. Organic cation transporter (TC 2.A.1.19) family. Post-translationally, phosphorylated. As to expression, expressed in kidney cortex in S1, S2 segments of renal proximal tubules as well as in kidney medulla. Expressed throughout the liver lobuli, in hepatocytes surrounding the central veins. Expressed in enterocytes of villi and crypts in small intestine. Expressed in brain, in some white matter regions like the corpus callosum and in the granular layer of the cerebellum. Expressed in Sertoli cells in testis. Expressed in colon. Expressed in tracheal and bronchial ciliated epithelium in the respiratory tract. Expressed in spleen, moderately in skin, and weakly in the gastrointestinal tract, lung, thymus, muscle, and prostate. Expressed in kidney cortex and medulla. Expressed in intestine, liver and colon.

Its subcellular location is the basolateral cell membrane. It localises to the apical cell membrane. The protein localises to the lateral cell membrane. It is found in the basal cell membrane. The protein resides in the cell membrane. The catalysed reaction is 1-methylnicotinamide(out) = 1-methylnicotinamide(in). The enzyme catalyses dopamine(out) = dopamine(in). It catalyses the reaction serotonin(out) = serotonin(in). It carries out the reaction (R)-adrenaline(out) = (R)-adrenaline(in). The catalysed reaction is (R)-noradrenaline(out) = (R)-noradrenaline(in). The enzyme catalyses histamine(out) = histamine(in). It catalyses the reaction guanidine(out) = guanidine(in). It carries out the reaction choline(out) = choline(in). The catalysed reaction is acetylcholine(in) = acetylcholine(out). The enzyme catalyses thiamine(in) = thiamine(out). It catalyses the reaction agmatine(out) = agmatine(in). It carries out the reaction putrescine(out) = putrescine(in). The catalysed reaction is spermidine(in) = spermidine(out). The enzyme catalyses (R)-carnitine(in) = (R)-carnitine(out). It catalyses the reaction O-isobutanoyl-(R)-carnitine(in) = O-isobutanoyl-(R)-carnitine(out). It carries out the reaction O-acetyl-(R)-carnitine(in) = O-acetyl-(R)-carnitine(out). The catalysed reaction is O-3-hydroxybutanoyl-(R)-carnitine(in) = O-3-hydroxybutanoyl-(R)-carnitine(out). The enzyme catalyses O-propanoyl-(R)-carnitine(in) = O-propanoyl-(R)-carnitine(out). It catalyses the reaction O-butanoyl-(R)-carnitine(in) = O-butanoyl-(R)-carnitine(out). It carries out the reaction O-2-methylbutanoyl-(R)-carnitine(in) = O-2-methylbutanoyl-(R)-carnitine(out). The catalysed reaction is O-3-methylbutanoyl-(R)-carnitine(in) = O-3-methylbutanoyl-(R)-carnitine(out). The enzyme catalyses O-hexanoyl-(R)-carnitine(in) = O-hexanoyl-(R)-carnitine(out). It catalyses the reaction L-histidyl-L-proline diketopiperazine(in) = L-histidyl-L-proline diketopiperazine(out). It carries out the reaction (R)-salsolinol(in) = (R)-salsolinol(out). The catalysed reaction is prostaglandin F2alpha(out) = prostaglandin F2alpha(in). The enzyme catalyses prostaglandin E2(out) = prostaglandin E2(in). With respect to regulation, phosphorylation of the transporter leads to changes in its substrate affinity, resulting in a regulation of the transport activity. In contrast with human ortholog, ASP uptake is stimulated by protein kinase A (PKA) and C (PKC) and endogenous tyrosine kinase activation. ASP affinity is induced by PKC-dependent phosphorylation. Inhibited by cGMP, most likely through a cGMP-binding protein that interacts with OCT1. Functionally, electrogenic voltage-dependent transporter that mediates the transport of a variety of organic cations such as endogenous bioactive amines, cationic drugs and xenobiotics. Functions as a pH- and Na(+)-independent, bidirectional transporter. Cation cellular uptake or release is driven by the electrochemical potential (i.e. membrane potential and concentration gradient) and substrate selectivity. Hydrophobicity is a major requirement for recognition in polyvalent substrates and inhibitors. Primarily expressed in the basolateral membrane of hepatocytes and proximal tubules and involved in the uptake and disposition of cationic compounds from the blood by hepatic and renal clearance. Most likely functions as an uptake carrier in enterocytes contributing to the intestinal excretion and elimination of organic cations from the systemic circulation. Transports endogenous monoamines such as N-1-methylnicotinamide (NMN), guanidine, neurotransmitters dopamine, serotonin, noradrenaline, adrenaline and histamine, and quaternary ammonium compound such as choline. Also transports natural polyamines such as spermidine, agmatine and putrescine at low affinity, but relatively high turnover. Involved in the hepatic uptake of vitamin B1/thiamine, hence regulating hepatic lipid and energy metabolism. Contributes to the influx and efflux of fatty acid carriers carnitines and acylcarnitines across the basolateral membrane of hepatocytes, from the liver to the systemic circulation and inversely and may be involved in regulating the systemic availability of hepatic acylcarnitines. Mediates the bidirectional transport of acetylcholine (ACh) at the apical membrane of ciliated cell in airway epithelium, thereby playing a role in luminal release of ACh from bronchial epithelium. Transports dopaminergic neuromodulators cyclo(his-pro) and salsolinol with lower efficency. Also capable of transporting non-amine endogenous compounds such as prostaglandin E2 (PGE2) and prostaglandin F2-alpha (PGF2-alpha). May contribute to the transport of cationic compounds in testis across the blood-testis-barrier. Also mediates the uptake of xenobiotics tributylmethylammonium (TBuMA), quinidine, N-methyl-quinine (NMQ), N-methyl-quinidine (NMQD) N-(4,4-azo-n-pentyl)-quinuclidine (APQ), azidoprocainamide methoiodide (AMP), N-(4,4-azo-n-pentyl)-21-deoxyajmalinium (APDA) and 4-(4-(dimethylamino)styryl)-N-methylpyridinium (ASP). Its function is as follows. Functional isoform capable of transporting TEA. This chain is Solute carrier family 22 member 1, found in Rattus norvegicus (Rat).